Here is a 114-residue protein sequence, read N- to C-terminus: Iron-sulfur cluster insertion protein ErpA (114 aa).

Positions 42, 106, and 108 each coordinate iron-sulfur cluster.

It belongs to the HesB/IscA family. As to quaternary structure, homodimer. Requires iron-sulfur cluster as cofactor.

Its function is as follows. Required for insertion of 4Fe-4S clusters for at least IspG. The polypeptide is Iron-sulfur cluster insertion protein ErpA (Yersinia enterocolitica serotype O:8 / biotype 1B (strain NCTC 13174 / 8081)).